Here is a 274-residue protein sequence, read N- to C-terminus: Small ribosomal subunit protein uS2 (274 aa).

The disordered stretch occupies residues 255 to 274 (AEAESEDKGEVLYSFDDEEE).

The protein belongs to the universal ribosomal protein uS2 family.

This chain is Small ribosomal subunit protein uS2, found in Gloeobacter violaceus (strain ATCC 29082 / PCC 7421).